The primary structure comprises 228 residues: Ribonuclease 3 (228 aa).

An RNase III domain is found at 8-130 (LKRLERRVDY…IIGAAFLDSD (123 aa)). Glu-43 contributes to the Mg(2+) binding site. Asp-47 is a catalytic residue. Positions 116 and 119 each coordinate Mg(2+). Residue Glu-119 is part of the active site. The region spanning 157–226 (DPKTRLQEHL…ANKMLDSLSG (70 aa)) is the DRBM domain.

It belongs to the ribonuclease III family. As to quaternary structure, homodimer. Mg(2+) is required as a cofactor.

The protein localises to the cytoplasm. The catalysed reaction is Endonucleolytic cleavage to 5'-phosphomonoester.. Digests double-stranded RNA. Involved in the processing of primary rRNA transcript to yield the immediate precursors to the large and small rRNAs (23S and 16S). Processes some mRNAs, and tRNAs when they are encoded in the rRNA operon. Processes pre-crRNA and tracrRNA of type II CRISPR loci if present in the organism. The polypeptide is Ribonuclease 3 (Psychromonas ingrahamii (strain DSM 17664 / CCUG 51855 / 37)).